Here is a 739-residue protein sequence, read N- to C-terminus: Ankyrin repeat and SAM domain-containing protein 6 (739 aa).

ANK repeat units lie at residues 1–30 (MGASVLAMAARGGHTHTVKLLLENGAFVDD), 57–86 (LEVRALLAAAQHGQGAAVALLLDWGSDARV), 91–120 (TGWSALMLAAAGGSLSVCQQLVERGADPDH), 124–156 (LGNTALEVALQLRRRDVQKYLDNITSVRPRPDD), 158–188 (KKRPDVFHALKLGNAQLVKEIVEQDAAQVDV), 192–221 (DGASPLMMAAVSGQLEVVQLLVEKRADVDR), 226–255 (HGWTALMQATYHGNKEVVKFLLSQGADVQL), and 259–290 (NGYTAFDLVMLLNDPDTELVRLLASVCMLVDK). Residues 295 to 305 (QRGKSALRRRA) are compositionally biased toward basic residues. Disordered regions lie at residues 295 to 320 (QRGKSALRRRASAGTPSPPEDKTGLK) and 449 to 645 (LRDA…ITDE). The span at 462–478 (PGRSSAGSDTASISRVV) shows a compositional bias: polar residues. 2 stretches are compositionally biased toward low complexity: residues 490–506 (GPSPSNSGSYNSAHSSG) and 582–592 (SSRSKSTSPTL). The span at 593–603 (TPSPSPTPAHT) shows a compositional bias: pro residues. Low complexity predominate over residues 604 to 641 (PAPAHTPAHRPTGASADSQGSASTQQRSRSSGGSSSGT). The SAM domain maps to 643 to 706 (TDEDELSGIL…LAAISELNAG (64 aa)).

The protein resides in the cell projection. It is found in the cilium. Its function is as follows. Required for renal function. This Danio rerio (Zebrafish) protein is Ankyrin repeat and SAM domain-containing protein 6 (anks6).